Consider the following 179-residue polypeptide: Crossover junction endodeoxyribonuclease RuvC (179 aa).

Catalysis depends on residues Asp7, Glu67, and Asp140. Residues Asp7, Glu67, and Asp140 each contribute to the Mg(2+) site.

It belongs to the RuvC family. In terms of assembly, homodimer which binds Holliday junction (HJ) DNA. The HJ becomes 2-fold symmetrical on binding to RuvC with unstacked arms; it has a different conformation from HJ DNA in complex with RuvA. In the full resolvosome a probable DNA-RuvA(4)-RuvB(12)-RuvC(2) complex forms which resolves the HJ. The cofactor is Mg(2+).

It is found in the cytoplasm. The enzyme catalyses Endonucleolytic cleavage at a junction such as a reciprocal single-stranded crossover between two homologous DNA duplexes (Holliday junction).. Its function is as follows. The RuvA-RuvB-RuvC complex processes Holliday junction (HJ) DNA during genetic recombination and DNA repair. Endonuclease that resolves HJ intermediates. Cleaves cruciform DNA by making single-stranded nicks across the HJ at symmetrical positions within the homologous arms, yielding a 5'-phosphate and a 3'-hydroxyl group; requires a central core of homology in the junction. The consensus cleavage sequence is 5'-(A/T)TT(C/G)-3'. Cleavage occurs on the 3'-side of the TT dinucleotide at the point of strand exchange. HJ branch migration catalyzed by RuvA-RuvB allows RuvC to scan DNA until it finds its consensus sequence, where it cleaves and resolves the cruciform DNA. This chain is Crossover junction endodeoxyribonuclease RuvC, found in Salinibacter ruber (strain DSM 13855 / M31).